We begin with the raw amino-acid sequence, 185 residues long: Small ribosomal subunit protein uS4 (185 aa).

Residues 108–170 (RRLQTLVYRK…GKSPFVDASH (63 aa)) enclose the S4 RNA-binding domain.

It belongs to the universal ribosomal protein uS4 family. Part of the 30S ribosomal subunit. Contacts protein S5. The interaction surface between S4 and S5 is involved in control of translational fidelity.

Functionally, one of the primary rRNA binding proteins, it binds directly to 16S rRNA where it nucleates assembly of the body of the 30S subunit. With S5 and S12 plays an important role in translational accuracy. This is Small ribosomal subunit protein uS4 from Methanoregula boonei (strain DSM 21154 / JCM 14090 / 6A8).